The following is a 173-amino-acid chain: Myosin light chain 5 (173 aa).

The disordered stretch occupies residues 1 to 20 (MASRKTKKKEGGALRAQRAS). EF-hand domains follow at residues 30–65 (TQIQ…LGKT), 100–135 (DAEE…QADK), and 136–171 (MTAE…GEEK). Ca(2+) contacts are provided by Asp-43, Asn-45, Asp-47, and Asp-54.

Myosin is a hexamer of 2 heavy chains and 4 light chains. As to expression, expressed in fetal skeletal muscle and retina.

This is Myosin light chain 5 (MYL5) from Homo sapiens (Human).